Consider the following 898-residue polypeptide: Coiled-coil domain-containing protein 186 (898 aa).

3 disordered regions span residues 1–43 (MSET…NESK), 68–95 (NYIP…QIAN), and 702–749 (RRKL…SSVA). The residue at position 2 (Ser2) is an N-acetylserine. Positions 82-95 (KTDTGSENSEQIAN) are enriched in polar residues. Residues 201–712 (KYLQQEHIIK…RKLDQVESGS (512 aa)) adopt a coiled-coil conformation. Positions 703–717 (RKLDQVESGSYDKEV) are enriched in basic and acidic residues. The segment covering 718–734 (SSMGSRSSSSGSLNARS) has biased composition (low complexity). A Phosphoserine modification is found at Ser740. Coiled coils occupy residues 759 to 803 (AMLI…IQSY) and 855 to 894 (KLQA…LEQR).

This chain is Coiled-coil domain-containing protein 186 (CCDC186), found in Homo sapiens (Human).